Reading from the N-terminus, the 1566-residue chain is Arginine-glutamic acid dipeptide repeats protein (1566 aa).

Residues 1–36 (MTADKDKDKDKEKDRDRDRDREREKRDKARESENSR) show a composition bias toward basic and acidic residues. A disordered region spans residues 1-90 (MTADKDKDKD…KKKSRYERTD (90 aa)). Residues Ser53 and Ser56 each carry the phosphoserine modification. Over residues 74-85 (KNKKKPPKKKSR) the composition is skewed to basic residues. In terms of domain architecture, BAH spans 103-283 (VVYRPGDCVY…PETRRLNSTQ (181 aa)). Residue Thr120 is modified to Phosphothreonine. A phosphoserine mark is found at Ser142 and Ser304. The ELM2 domain maps to 284-387 (GEIRVGPSHQ…KALQRLVKKP (104 aa)). In terms of domain architecture, SANT spans 391–443 (LIEKCWTEDEVKRFVKGLRQYGKNFFRIRKELLPNKETGELITFYYYWKKTPE). The interval 464-495 (TRTASTPVNTPSRPPSSEFLDLSSASEDDFDS) is disordered. A compositionally biased stretch (polar residues) spans 465–474 (RTASTPVNTP). The segment covering 479–488 (SSEFLDLSSA) has biased composition (low complexity). Residues 507 to 532 (CRHCFTTTSKDWHHGGRENILLCTDC) form a GATA-type zinc finger. The segment at 542–1133 (LPPIEKPVDP…PSHASQSARF (592 aa)) is disordered. A Glycyl lysine isopeptide (Lys-Gly) (interchain with G-Cter in SUMO2) cross-link involves residue Lys560. Residues Ser594, Ser600, and Ser613 each carry the phosphoserine modification. The segment covering 609 to 623 (SGRNSPSAASTSSND) has biased composition (low complexity). Basic and acidic residues predominate over residues 624–640 (SKAETVKKSAKKVKEEA). A Glycyl lysine isopeptide (Lys-Gly) (interchain with G-Cter in SUMO2) cross-link involves residue Lys637. Ser642, Ser656, Ser675, and Ser679 each carry phosphoserine. A compositionally biased stretch (basic and acidic residues) spans 652 to 673 (EKVASDTEEADRTSSKKTKTQE). A compositionally biased stretch (basic and acidic residues) spans 688–708 (SDSRSVNDEGSSDPKDIDQDN). The segment covering 709-720 (RSTSPSIPSPQD) has biased composition (polar residues). Over residues 726–751 (DSSAQQQMLQAQPPALQAPTGVTPAP) the composition is skewed to low complexity. Pro residues predominate over residues 752–767 (SSAPPGTPQLPTPGPT). A compositionally biased stretch (low complexity) spans 778-796 (SPTASQAPNQPQAPTAPVP). Residues 809–827 (QRPPSPHPPPHPSPHPPLQ) show a composition bias toward pro residues. The segment covering 829–840 (LTGSAGQPSAPS) has biased composition (polar residues). Composition is skewed to low complexity over residues 843-865 (QPPLHGQGPPGPHSLQAGPLLQH) and 897-913 (SLQLPASQSALQSQQPP). Residues 914 to 940 (REQPLPPAPLAMPHIKPPPTTPIPQLP) are compositionally biased toward pro residues. A compositionally biased stretch (low complexity) spans 970 to 980 (KPLSSLSTHHP). The span at 1030-1052 (PQPPFAQHPFVPGGPPPITPPTC) shows a compositional bias: pro residues. Residues 1053 to 1085 (PSTSTPPAGPGTSAQPPCSGAAASGGSIAGGSS) are compositionally biased toward low complexity. 3 positions are modified to phosphoserine: Ser1106, Ser1113, and Ser1115. Over residues 1106–1117 (SPPPPPRSPSPE) the composition is skewed to pro residues. Thr1119 carries the post-translational modification Phosphothreonine. The stretch at 1156-1211 (GSKLAKKREEAIEKAKREAEQKAREEREREKEKEKEREREREREREAERAAKASSS) forms a coiled coil. At Lys1158 the chain carries N6-acetyllysine. A compositionally biased stretch (basic and acidic residues) spans 1162–1206 (KREEAIEKAKREAEQKAREEREREKEKEKEREREREREREAERAA). The segment at 1162 to 1246 (KREEAIEKAK…TTIAAVPPYI (85 aa)) is disordered. Tyr1259 carries the phosphotyrosine modification. Ser1266 carries the post-translational modification Phosphoserine.

In terms of assembly, interacts with HDAC1. Interacts with ATN1. Interaction with ATN1 is improved when the poly-Gln region of ATN1 is extended. Interacts with FAT1. In terms of tissue distribution, widely expressed. Expressed in tumor cell lines.

Its subcellular location is the nucleus. In terms of biological role, plays a role as a transcriptional repressor during development. May play a role in the control of cell survival. Overexpression of RERE recruits BAX to the nucleus particularly to POD and triggers caspase-3 activation, leading to cell death. The protein is Arginine-glutamic acid dipeptide repeats protein (RERE) of Homo sapiens (Human).